A 186-amino-acid chain; its full sequence is MISSNDFRTGTTIELDGQVWRVVEFLHVKPGKGSAFVRTKLKSVQNGNVVEKTFRAGESVQQAILEKSNLQHTYVESGDYVFMDMTSFEETRLSSEQIGKGAKYLKEGMEVNVIFHNGKVLEVELPISITLKVTETDPGVKGDTASGGTKPAILETGAQVMVPLFISVGEMIRVDTRNDSYLGREN.

The protein belongs to the elongation factor P family.

The protein resides in the cytoplasm. It functions in the pathway protein biosynthesis; polypeptide chain elongation. In terms of biological role, involved in peptide bond synthesis. Stimulates efficient translation and peptide-bond synthesis on native or reconstituted 70S ribosomes in vitro. Probably functions indirectly by altering the affinity of the ribosome for aminoacyl-tRNA, thus increasing their reactivity as acceptors for peptidyl transferase. In Prochlorococcus marinus (strain MIT 9301), this protein is Elongation factor P.